Reading from the N-terminus, the 202-residue chain is Guanylate kinase (202 aa).

In terms of domain architecture, Guanylate kinase-like spans 3-181; the sequence is GNLFVVAAPS…ALDDLRAVVR (179 aa). ATP is bound at residue 10–17; that stretch reads APSGAGKT.

Belongs to the guanylate kinase family.

The protein localises to the cytoplasm. It catalyses the reaction GMP + ATP = GDP + ADP. In terms of biological role, essential for recycling GMP and indirectly, cGMP. The chain is Guanylate kinase from Dechloromonas aromatica (strain RCB).